A 431-amino-acid chain; its full sequence is uncharacterized protein (431 aa).

2 helical membrane passes run 42–62 (LLIG…IGCL) and 74–94 (VMIF…ATML). Asn105 carries N-linked (GlcNAc...) asparagine; by host glycosylation. A run of 5 helical transmembrane segments spans residues 111–131 (LVLF…LFLI), 153–173 (AGVA…AAVP), 202–222 (MWFL…ELAY), 236–256 (VCTF…FRVL), and 279–299 (ATRT…IAFF).

The protein resides in the membrane. This is an uncharacterized protein from Homo sapiens (Human).